The primary structure comprises 1167 residues: Topoisomerase 1-associated factor 1 (1167 aa).

5 disordered regions span residues 332–353, 563–594, 889–969, 981–1093, and 1105–1167; these read SKRW…NNDF, SRRR…DYAE, KYSH…LENT, YVHA…DAID, and FDDD…SDSE. The span at 572–582 shows a compositional bias: basic and acidic residues; sequence REEQLVNKGSD. Composition is skewed to acidic residues over residues 583 to 593 and 949 to 958; these read EEQESEDEDYA and EEEPVDEETL. 2 stretches are compositionally biased toward basic and acidic residues: residues 959–969 and 996–1013; these read EERRQARLENT and EFFR…ERIK. The segment covering 1062 to 1074 has biased composition (acidic residues); it reads ELEEDDILMDDME. Residues 1078-1088 show a composition bias toward polar residues; it reads RASSGEYSSND. Residues 1110 to 1127 show a composition bias toward basic and acidic residues; the sequence is AFGRDRDKDETSVDRDGA.

This sequence belongs to the timeless family.

The protein localises to the nucleus. In terms of biological role, involved in chromosome segregation during meiosis and DNA damage repair. This chain is Topoisomerase 1-associated factor 1 (tof1), found in Emericella nidulans (strain FGSC A4 / ATCC 38163 / CBS 112.46 / NRRL 194 / M139) (Aspergillus nidulans).